A 229-amino-acid chain; its full sequence is Probable U3 small nucleolar RNA-associated protein 11 (229 aa).

2 disordered regions span residues 1–23 (MSSL…ESRK) and 199–229 (KKPG…QRKR).

The protein belongs to the UTP11 family. As to quaternary structure, component of the ribosomal small subunit (SSU) processome.

The protein resides in the nucleus. Its subcellular location is the nucleolus. Involved in nucleolar processing of pre-18S ribosomal RNA. This is Probable U3 small nucleolar RNA-associated protein 11 from Oryza sativa subsp. japonica (Rice).